We begin with the raw amino-acid sequence, 460 residues long: Phosphoenolpyruvate carboxylase (460 aa).

It belongs to the PEPCase type 2 family. In terms of assembly, homotetramer. Mg(2+) is required as a cofactor.

It catalyses the reaction oxaloacetate + phosphate = phosphoenolpyruvate + hydrogencarbonate. Catalyzes the irreversible beta-carboxylation of phosphoenolpyruvate (PEP) to form oxaloacetate (OAA), a four-carbon dicarboxylic acid source for the tricarboxylic acid cycle. The protein is Phosphoenolpyruvate carboxylase of Pyrobaculum arsenaticum (strain DSM 13514 / JCM 11321 / PZ6).